A 66-amino-acid polypeptide reads, in one-letter code: Stress-associated endoplasmic reticulum protein 1 (66 aa).

The interval 1 to 31 is disordered; the sequence is MVAKQRIRMANEKHSKNITQRGNVAKTSRNA. The segment covering 17-30 has biased composition (polar residues); sequence NITQRGNVAKTSRN. A helical transmembrane segment spans residues 39 to 59; that stretch reads GPWLLALFIFVVCGSAIFQII.

Belongs to the RAMP4 family. Interacts with SEC61B, SEC61A1 and the SEC61 complex. Interacts with CANX.

The protein resides in the membrane. It localises to the endoplasmic reticulum membrane. Functionally, interacts with target proteins during their translocation into the lumen of the endoplasmic reticulum. Protects unfolded target proteins against degradation during ER stress. May facilitate glycosylation of target proteins after termination of ER stress. May modulate the use of N-glycosylation sites on target proteins. The polypeptide is Stress-associated endoplasmic reticulum protein 1 (SERP1) (Bos taurus (Bovine)).